We begin with the raw amino-acid sequence, 196 residues long: Large ribosomal subunit protein bL25 (196 aa).

It belongs to the bacterial ribosomal protein bL25 family. CTC subfamily. As to quaternary structure, part of the 50S ribosomal subunit; part of the 5S rRNA/L5/L18/L25 subcomplex. Contacts the 5S rRNA. Binds to the 5S rRNA independently of L5 and L18.

In terms of biological role, this is one of the proteins that binds to the 5S RNA in the ribosome where it forms part of the central protuberance. This chain is Large ribosomal subunit protein bL25, found in Geotalea daltonii (strain DSM 22248 / JCM 15807 / FRC-32) (Geobacter daltonii).